Here is a 166-residue protein sequence, read N- to C-terminus: Ribosome-binding factor A (166 aa).

Positions 119-166 (VQAQAKSGVYAGDEDPYVKPRVIGEDEDEDDEDGDDIDRSAPGYEPAH) are disordered. Residues 143–154 (EDEDEDDEDGDD) show a composition bias toward acidic residues.

The protein belongs to the RbfA family. In terms of assembly, monomer. Binds 30S ribosomal subunits, but not 50S ribosomal subunits or 70S ribosomes.

Its subcellular location is the cytoplasm. In terms of biological role, one of several proteins that assist in the late maturation steps of the functional core of the 30S ribosomal subunit. Associates with free 30S ribosomal subunits (but not with 30S subunits that are part of 70S ribosomes or polysomes). Required for efficient processing of 16S rRNA. May interact with the 5'-terminal helix region of 16S rRNA. The protein is Ribosome-binding factor A of Clavibacter michiganensis subsp. michiganensis (strain NCPPB 382).